We begin with the raw amino-acid sequence, 606 residues long: Phosphogluconate dehydratase (606 aa).

Residues Cys156 and Cys223 each contribute to the [4Fe-4S] cluster site.

This sequence belongs to the IlvD/Edd family. Requires [4Fe-4S] cluster as cofactor.

It carries out the reaction 6-phospho-D-gluconate = 2-dehydro-3-deoxy-6-phospho-D-gluconate + H2O. It functions in the pathway carbohydrate metabolism; Entner-Doudoroff pathway. Its function is as follows. Catalyzes the dehydration of 6-phospho-D-gluconate to 2-dehydro-3-deoxy-6-phospho-D-gluconate. The sequence is that of Phosphogluconate dehydratase from Rhizobium meliloti (strain 1021) (Ensifer meliloti).